Reading from the N-terminus, the 179-residue chain is Gamma-glutamyl cyclotransferase verK (179 aa).

This sequence belongs to the class-I pyridoxal-phosphate-dependent aminotransferase family.

It catalyses the reaction an alpha-(gamma-L-glutamyl)-L-amino acid = 5-oxo-L-proline + an L-alpha-amino acid. It participates in mycotoxin biosynthesis. Its function is as follows. Gamma-glutamyl cyclotransferase; part of the gene cluster that mediates the biosynthesis of 11'-deoxyverticillin A, one of the dimeric epipolythiodioxopiperazines (ETPs) from the verticillin family that act as mycotoxins. 11'-deoxyverticillin A is required for normal conidiation. The nonribosomal peptide synthetase verP is speculated to be responsible for condensation of amino acids to form the carbon skeleton of verticillin, whereas the cluster-specific tailoring enzymes are involved in further modifications leading to the production of 11'-deoxyverticillin A. The protein is Gamma-glutamyl cyclotransferase verK of Clonostachys rogersoniana.